The chain runs to 127 residues: MKAIFIILAILMVTQAFKMTSKVKSMNMSRNMSKNTSTLGTKYTYGCPQTNTPTQQDCYDAMYYTFMAMCDLYPDPEHPMFPSYDSCQEESDSADEFYTNQCGCGGYGMAAAHDQVCLLALGVCIPE.

The signal sequence occupies residues 1–16 (MKAIFIILAILMVTQA). A propeptide spanning residues 17 to 42 (FKMTSKVKSMNMSRNMSKNTSTLGTK) is cleaved from the precursor.

The protein resides in the secreted. In terms of biological role, mating ciliate pheromones (or gamones) are diffusible extracellular communication signals that distinguish different intraspecific classes of cells commonly referred to as 'mating types'. They prepare the latter for conjugation by changing their cell surface properties. The protein is Mating pheromone 4 (PHR4) of Euplotoides octocarinatus (Freshwater ciliate).